Reading from the N-terminus, the 356-residue chain is Uroporphyrinogen decarboxylase (356 aa).

Residues 23 to 27 (RQAGR), Asp-72, Tyr-148, Ser-203, and His-321 contribute to the substrate site.

Belongs to the uroporphyrinogen decarboxylase family. In terms of assembly, homodimer.

Its subcellular location is the cytoplasm. The catalysed reaction is uroporphyrinogen III + 4 H(+) = coproporphyrinogen III + 4 CO2. The protein operates within porphyrin-containing compound metabolism; protoporphyrin-IX biosynthesis; coproporphyrinogen-III from 5-aminolevulinate: step 4/4. Its function is as follows. Catalyzes the decarboxylation of four acetate groups of uroporphyrinogen-III to yield coproporphyrinogen-III. This chain is Uroporphyrinogen decarboxylase, found in Chloroflexus aggregans (strain MD-66 / DSM 9485).